The primary structure comprises 352 residues: N-acetyl-gamma-glutamyl-phosphate reductase (352 aa).

This sequence belongs to the NAGSA dehydrogenase family. Type 1 subfamily.

The protein localises to the cytoplasm. The catalysed reaction is N-acetyl-L-glutamate 5-semialdehyde + phosphate + NADP(+) = N-acetyl-L-glutamyl 5-phosphate + NADPH + H(+). Its pathway is amino-acid biosynthesis; L-arginine biosynthesis; N(2)-acetyl-L-ornithine from L-glutamate: step 3/4. Its function is as follows. Catalyzes the NADPH-dependent reduction of N-acetyl-5-glutamyl phosphate to yield N-acetyl-L-glutamate 5-semialdehyde. The polypeptide is N-acetyl-gamma-glutamyl-phosphate reductase (Nostoc ellipsosporum).